We begin with the raw amino-acid sequence, 446 residues long: tRNA-2-methylthio-N(6)-dimethylallyladenosine synthase (446 aa).

An MTTase N-terminal domain is found at 3-119 (KKIFIKTFGC…INEAILNHLK (117 aa)). Residues Cys12, Cys48, Cys82, Cys158, Cys162, and Cys165 each contribute to the [4Fe-4S] cluster site. In terms of domain architecture, Radical SAM core spans 144–374 (KDSKVSSFLT…QEKLFNNQIK (231 aa)). A TRAM domain is found at 377 to 439 (KSLENKILNV…QNSLFGKLTE (63 aa)).

Belongs to the methylthiotransferase family. MiaB subfamily. As to quaternary structure, monomer. [4Fe-4S] cluster serves as cofactor.

Its subcellular location is the cytoplasm. It catalyses the reaction N(6)-dimethylallyladenosine(37) in tRNA + (sulfur carrier)-SH + AH2 + 2 S-adenosyl-L-methionine = 2-methylsulfanyl-N(6)-dimethylallyladenosine(37) in tRNA + (sulfur carrier)-H + 5'-deoxyadenosine + L-methionine + A + S-adenosyl-L-homocysteine + 2 H(+). Functionally, catalyzes the methylthiolation of N6-(dimethylallyl)adenosine (i(6)A), leading to the formation of 2-methylthio-N6-(dimethylallyl)adenosine (ms(2)i(6)A) at position 37 in tRNAs that read codons beginning with uridine. The protein is tRNA-2-methylthio-N(6)-dimethylallyladenosine synthase of Pelagibacter ubique (strain HTCC1062).